Here is a 232-residue protein sequence, read N- to C-terminus: MTNADPHELQKFSDLAHKWWDPNAEFKPLHDLNPIRLNWIDAHAHLPGKRVVDIGCGGGILSESMASLGAQVKGIDLATEALGVADLHSLESGVSVDYEAIAAEALAAREPGAYDVVTCMEMLEHVPSPANIVAACATLVKPGGWVFFSTLNRNLKSYLLAVIGAEYIAQMLPKGTHDYARFIRPSELAHFVRAAGLQLVEIKGITYHPLAKRFALSNDTDVNYLVACRRSV.

S-adenosyl-L-methionine-binding residues include Arg-36, Gly-55, Asp-76, and Met-120.

The protein belongs to the methyltransferase superfamily. UbiG/COQ3 family.

It carries out the reaction a 3-demethylubiquinol + S-adenosyl-L-methionine = a ubiquinol + S-adenosyl-L-homocysteine + H(+). The enzyme catalyses a 3-(all-trans-polyprenyl)benzene-1,2-diol + S-adenosyl-L-methionine = a 2-methoxy-6-(all-trans-polyprenyl)phenol + S-adenosyl-L-homocysteine + H(+). The protein operates within cofactor biosynthesis; ubiquinone biosynthesis. Functionally, O-methyltransferase that catalyzes the 2 O-methylation steps in the ubiquinone biosynthetic pathway. This Burkholderia thailandensis (strain ATCC 700388 / DSM 13276 / CCUG 48851 / CIP 106301 / E264) protein is Ubiquinone biosynthesis O-methyltransferase.